Reading from the N-terminus, the 344-residue chain is Holliday junction branch migration complex subunit RuvB (344 aa).

The tract at residues 1 to 182 is large ATPase domain (RuvB-L); it reads MRIELLNTPV…FGISNRFDYY (182 aa). Residues Ile21, Arg22, Gly63, Lys66, Thr67, Thr68, 129-131, Arg172, Tyr182, and Arg219 contribute to the ATP site; that span reads EDF. Thr67 is a binding site for Mg(2+). Residues 183–253 form a small ATPAse domain (RuvB-S) region; the sequence is PPELLETILM…TAMKTLDSLE (71 aa). The interval 256 to 344 is head domain (RuvB-H); it reads EEGLDEMDKK…GTLFDGQEHV (89 aa). Residues Arg311 and Arg316 each contribute to the DNA site.

Belongs to the RuvB family. As to quaternary structure, homohexamer. Forms an RuvA(8)-RuvB(12)-Holliday junction (HJ) complex. HJ DNA is sandwiched between 2 RuvA tetramers; dsDNA enters through RuvA and exits via RuvB. An RuvB hexamer assembles on each DNA strand where it exits the tetramer. Each RuvB hexamer is contacted by two RuvA subunits (via domain III) on 2 adjacent RuvB subunits; this complex drives branch migration. In the full resolvosome a probable DNA-RuvA(4)-RuvB(12)-RuvC(2) complex forms which resolves the HJ.

It localises to the cytoplasm. The catalysed reaction is ATP + H2O = ADP + phosphate + H(+). The RuvA-RuvB-RuvC complex processes Holliday junction (HJ) DNA during genetic recombination and DNA repair, while the RuvA-RuvB complex plays an important role in the rescue of blocked DNA replication forks via replication fork reversal (RFR). RuvA specifically binds to HJ cruciform DNA, conferring on it an open structure. The RuvB hexamer acts as an ATP-dependent pump, pulling dsDNA into and through the RuvAB complex. RuvB forms 2 homohexamers on either side of HJ DNA bound by 1 or 2 RuvA tetramers; 4 subunits per hexamer contact DNA at a time. Coordinated motions by a converter formed by DNA-disengaged RuvB subunits stimulates ATP hydrolysis and nucleotide exchange. Immobilization of the converter enables RuvB to convert the ATP-contained energy into a lever motion, pulling 2 nucleotides of DNA out of the RuvA tetramer per ATP hydrolyzed, thus driving DNA branch migration. The RuvB motors rotate together with the DNA substrate, which together with the progressing nucleotide cycle form the mechanistic basis for DNA recombination by continuous HJ branch migration. Branch migration allows RuvC to scan DNA until it finds its consensus sequence, where it cleaves and resolves cruciform DNA. The protein is Holliday junction branch migration complex subunit RuvB of Chlorobium luteolum (strain DSM 273 / BCRC 81028 / 2530) (Pelodictyon luteolum).